A 256-amino-acid polypeptide reads, in one-letter code: Ubiquinone/menaquinone biosynthesis C-methyltransferase UbiE (256 aa).

Positions 1–12 are enriched in basic and acidic residues; sequence MTDPRKGDHAEP. Positions 1 to 21 are disordered; that stretch reads MTDPRKGDHAEPTTHFGYQDV. S-adenosyl-L-methionine-binding positions include T79, D100, and 128–129; that span reads DA.

Belongs to the class I-like SAM-binding methyltransferase superfamily. MenG/UbiE family.

The catalysed reaction is a 2-demethylmenaquinol + S-adenosyl-L-methionine = a menaquinol + S-adenosyl-L-homocysteine + H(+). The enzyme catalyses a 2-methoxy-6-(all-trans-polyprenyl)benzene-1,4-diol + S-adenosyl-L-methionine = a 5-methoxy-2-methyl-3-(all-trans-polyprenyl)benzene-1,4-diol + S-adenosyl-L-homocysteine + H(+). It functions in the pathway quinol/quinone metabolism; menaquinone biosynthesis; menaquinol from 1,4-dihydroxy-2-naphthoate: step 2/2. Its pathway is cofactor biosynthesis; ubiquinone biosynthesis. In terms of biological role, methyltransferase required for the conversion of demethylmenaquinol (DMKH2) to menaquinol (MKH2) and the conversion of 2-polyprenyl-6-methoxy-1,4-benzoquinol (DDMQH2) to 2-polyprenyl-3-methyl-6-methoxy-1,4-benzoquinol (DMQH2). The sequence is that of Ubiquinone/menaquinone biosynthesis C-methyltransferase UbiE from Pseudomonas entomophila (strain L48).